The following is a 451-amino-acid chain: Tubulin beta-1 chain (451 aa).

Positions 1-4 match the MREI motif motif; it reads MREI. Residues Gln11, Glu69, Ser138, Gly142, Thr143, and Gly144 each coordinate GTP. Position 69 (Glu69) interacts with Mg(2+). At Ser172 the chain carries Phosphoserine; by CDK1. 2 residues coordinate GTP: Asn204 and Asn226. The tract at residues 432-451 is disordered; sequence LEEDEEVTEEAEMEPEDKGH. The segment covering 433–451 has biased composition (acidic residues); that stretch reads EEDEEVTEEAEMEPEDKGH. A 5-glutamyl polyglutamate modification is found at Glu440.

Belongs to the tubulin family. Dimer of alpha and beta chains. A typical microtubule is a hollow water-filled tube with an outer diameter of 25 nm and an inner diameter of 15 nM. Alpha-beta heterodimers associate head-to-tail to form protofilaments running lengthwise along the microtubule wall with the beta-tubulin subunit facing the microtubule plus end conferring a structural polarity. Microtubules usually have 13 protofilaments but different protofilament numbers can be found in some organisms and specialized cells. Interacts with RANBP10. The cofactor is Mg(2+). In terms of processing, some glutamate residues at the C-terminus are polyglutamylated, resulting in polyglutamate chains on the gamma-carboxyl group. Polyglutamylation plays a key role in microtubule severing by spastin (SPAST). SPAST preferentially recognizes and acts on microtubules decorated with short polyglutamate tails: severing activity by SPAST increases as the number of glutamates per tubulin rises from one to eight, but decreases beyond this glutamylation threshold. Glutamylation is also involved in cilia motility. Post-translationally, some glutamate residues at the C-terminus are monoglycylated but not polyglycylated due to the absence of functional TTLL10 in human. Monoglycylation is mainly limited to tubulin incorporated into cilia and flagella axonemes, which is required for their stability and maintenance. Flagella glycylation controls sperm motility. Both polyglutamylation and monoglycylation can coexist on the same protein on adjacent residues, and lowering glycylation levels increases polyglutamylation, and reciprocally. Phosphorylated on Ser-172 by CDK1 during the cell cycle, from metaphase to telophase, but not in interphase. This phosphorylation inhibits tubulin incorporation into microtubules. In terms of tissue distribution, hematopoietic cell-specific. Major isotype in leukocytes, where it represents 50% of all beta-tubulins.

The protein localises to the cytoplasm. It is found in the cytoskeleton. In terms of biological role, tubulin is the major constituent of microtubules, a cylinder consisting of laterally associated linear protofilaments composed of alpha- and beta-tubulin heterodimers. Microtubules grow by the addition of GTP-tubulin dimers to the microtubule end, where a stabilizing cap forms. Below the cap, tubulin dimers are in GDP-bound state, owing to GTPase activity of alpha-tubulin. This chain is Tubulin beta-1 chain (TUBB1), found in Homo sapiens (Human).